A 134-amino-acid polypeptide reads, in one-letter code: 6,7-dimethyl-8-ribityllumazine synthase (134 aa).

Residues F11, 43–45 (AYD), and 67–69 (AIV) each bind 5-amino-6-(D-ribitylamino)uracil. Residue 72 to 73 (DT) coordinates (2S)-2-hydroxy-3-oxobutyl phosphate. H75 (proton donor) is an active-site residue. F100 contacts 5-amino-6-(D-ribitylamino)uracil. R115 is a (2S)-2-hydroxy-3-oxobutyl phosphate binding site.

It belongs to the DMRL synthase family.

It carries out the reaction (2S)-2-hydroxy-3-oxobutyl phosphate + 5-amino-6-(D-ribitylamino)uracil = 6,7-dimethyl-8-(1-D-ribityl)lumazine + phosphate + 2 H2O + H(+). Its pathway is cofactor biosynthesis; riboflavin biosynthesis; riboflavin from 2-hydroxy-3-oxobutyl phosphate and 5-amino-6-(D-ribitylamino)uracil: step 1/2. Catalyzes the formation of 6,7-dimethyl-8-ribityllumazine by condensation of 5-amino-6-(D-ribitylamino)uracil with 3,4-dihydroxy-2-butanone 4-phosphate. This is the penultimate step in the biosynthesis of riboflavin. The sequence is that of 6,7-dimethyl-8-ribityllumazine synthase from Halorubrum lacusprofundi (strain ATCC 49239 / DSM 5036 / JCM 8891 / ACAM 34).